Consider the following 538-residue polypeptide: Retinoblastoma-binding protein 5 (538 aa).

2 WD repeats span residues aspartate 22 to serine 63 and alanine 64 to arginine 103. Residue lysine 129 forms a Glycyl lysine isopeptide (Lys-Gly) (interchain with G-Cter in SUMO2) linkage. WD repeat units lie at residues aspartate 148–serine 188, serine 196–arginine 235, valine 249–histidine 291, and threonine 293–alanine 331. Threonine 252 is modified (phosphothreonine; by CDK1). Positions serine 330 to glycine 366 are interaction with ASH2L. The segment covering glutamate 344–serine 360 has biased composition (acidic residues). The interval glutamate 344–valine 377 is disordered. A Phosphoserine modification is found at serine 350. The interaction with WDR5 stretch occupies residues glutamate 371–valine 380. A phosphoserine mark is found at serine 388 and serine 389. The tract at residues valine 408 to leucine 538 is disordered. Positions serine 479 to serine 490 are enriched in basic residues. Residues lysine 491–leucine 510 are compositionally biased toward basic and acidic residues. At serine 497 the chain carries Phosphoserine; by CDK1. The residue at position 525 (serine 525) is a Phosphoserine.

Component of the SET1 complex, at least composed of the catalytic subunit (SETD1A or SETD1B), WDR5, WDR82, RBBP5, ASH2L/ASH2, CXXC1/CFP1, HCFC1 and DPY30. Core component of several methyltransferase-containing complexes including MLL1/MLL, MLL2/3 (also named ASCOM complex) and MLL4/WBP7. Each complex is at least composed of ASH2L, RBBP5, WDR5, DPY30, one or more specific histone methyltransferases (KMT2A/MLL1, KMT2D/MLL2, KMT2C/MLL3 and KMT2B/MLL4), and the facultative components PAGR1, BACC1, CHD8, E2F6, HCFC1, HCFC2, HSP70, INO80C, KDM6A, KANSL1, LAS1L, MAX, MCRS1, MEN1, MGA, MYST1/MOF, NCOA6, PAXIP1/PTIP, PELP1, PHF20, PRP31, RING2, RUVB1/TIP49A, RUVB2/TIP49B, SENP3, TAF1, TAF4, TAF6, TAF7, TAF9, TEX10 and alpha- and beta-tubulin. Component of a histone methylation complex composed of at least ZNF335, RBBP5, ASH2L and WDR5; the complex may have histone H3-specific methyltransferase activity, however does not have specificity for 'Lys-4' of histone H3. Interacts with ZNF335. Interacts with ASH2L; the interaction is direct. Interacts with WDR5; the interaction is direct. Components of the ZNF335-RBBP5-ASH2L-WDR5 histone methylation complex may associate with components of a nuclear receptor-mediated transcription complex to form a complex at least composed of ZNF335, HCFC1, CCAR2, EMSY, MKI67, RBBP5, ASH2L and WDR5. Within this complex interacts with EMSY. Found in a complex with RBBP5, ASH2L, DPY30, KMT2A, KMT2D and WDR5. Interacts with SETD1A. Interacts with WDR82. As to expression, ubiquitously expressed.

It localises to the nucleus. Functionally, in embryonic stem (ES) cells, plays a crucial role in the differentiation potential, particularly along the neural lineage, regulating gene induction and H3 'Lys-4' methylation at key developmental loci, including that mediated by retinoic acid. Does not affect ES cell self-renewal. Component or associated component of some histone methyltransferase complexes which regulates transcription through recruitment of those complexes to gene promoters. As part of the MLL1/MLL complex, involved in mono-, di- and trimethylation at 'Lys-4' of histone H3. Histone H3 'Lys-4' methylation represents a specific tag for epigenetic transcriptional activation. In association with ASH2L and WDR5, stimulates the histone methyltransferase activities of KMT2A, KMT2B, KMT2C, KMT2D, SETD1A and SETD1B. This chain is Retinoblastoma-binding protein 5 (RBBP5), found in Homo sapiens (Human).